We begin with the raw amino-acid sequence, 502 residues long: Probable glycine dehydrogenase (decarboxylating) subunit 2 (502 aa).

Position 273 is an N6-(pyridoxal phosphate)lysine (K273).

It belongs to the GcvP family. C-terminal subunit subfamily. The glycine cleavage system is composed of four proteins: P, T, L and H. In this organism, the P 'protein' is a heterodimer of two subunits. It depends on pyridoxal 5'-phosphate as a cofactor.

It carries out the reaction N(6)-[(R)-lipoyl]-L-lysyl-[glycine-cleavage complex H protein] + glycine + H(+) = N(6)-[(R)-S(8)-aminomethyldihydrolipoyl]-L-lysyl-[glycine-cleavage complex H protein] + CO2. The glycine cleavage system catalyzes the degradation of glycine. The P protein binds the alpha-amino group of glycine through its pyridoxal phosphate cofactor; CO(2) is released and the remaining methylamine moiety is then transferred to the lipoamide cofactor of the H protein. This is Probable glycine dehydrogenase (decarboxylating) subunit 2 from Pyrococcus horikoshii (strain ATCC 700860 / DSM 12428 / JCM 9974 / NBRC 100139 / OT-3).